Consider the following 172-residue polypeptide: uncharacterized protein (172 aa).

A run of 4 helical transmembrane segments spans residues 20–40 (LVLI…EYIF), 48–68 (CVYE…ALII), 76–96 (LILI…HSFV), and 146–166 (MTEY…LILF).

The protein resides in the cell membrane. This is an uncharacterized protein from Rickettsia prowazekii (strain Madrid E).